Reading from the N-terminus, the 171-residue chain is Co-chaperone protein HscB (171 aa).

The 73-residue stretch at 2 to 74 (DYFTLFGLPA…LTRAEYLLSL (73 aa)) folds into the J domain.

It belongs to the HscB family. As to quaternary structure, interacts with HscA and stimulates its ATPase activity. Interacts with IscU.

Co-chaperone involved in the maturation of iron-sulfur cluster-containing proteins. Seems to help targeting proteins to be folded toward HscA. The sequence is that of Co-chaperone protein HscB from Klebsiella pneumoniae (strain 342).